Consider the following 320-residue polypeptide: Alpha/beta hydrolase domain-containing protein 17C (320 aa).

The segment at Arg50 to Pro75 is disordered. Positions Ala55–Gln65 are enriched in pro residues. Active-site charge relay system residues include Ser202, Asp267, and His296.

The protein belongs to the AB hydrolase superfamily. ABHD17 family. Post-translationally, palmitoylated on cysteine residues located in a cysteine cluster at the N-terminus which promotes membrane localization. Palmitoylation is required for post-synaptic localization and for depalmitoylating activity towards DLG4/PSD95.

The protein localises to the recycling endosome membrane. Its subcellular location is the cell projection. It localises to the dendritic spine. The protein resides in the postsynaptic density membrane. The enzyme catalyses S-hexadecanoyl-L-cysteinyl-[protein] + H2O = L-cysteinyl-[protein] + hexadecanoate + H(+). Hydrolyzes fatty acids from S-acylated cysteine residues in proteins. Has depalmitoylating activity towards DLG4/PSD95. This is Alpha/beta hydrolase domain-containing protein 17C from Mus musculus (Mouse).